The sequence spans 607 residues: Translation initiation factor IF-2 (607 aa).

The interval 54-93 is disordered; it reads SAPQAQDSTPVAETPAAAQPAAPQAASSQPAAAQAAQAVA. A compositionally biased stretch (low complexity) spans 62-93; that stretch reads TPVAETPAAAQPAAPQAASSQPAAAQAAQAVA. The tr-type G domain occupies 108–281; the sequence is HRAPVVTIMG…ELEDLRADPK (174 aa). Residues 117-124 form a G1 region; it reads GHVDHGKT. 117 to 124 is a GTP binding site; sequence GHVDHGKT. Residues 142 to 146 form a G2 region; it reads GITQH. Residues 163 to 166 are G3; sequence DTPG. GTP contacts are provided by residues 163–167 and 217–220; these read DTPGH and NKVD. The interval 217-220 is G4; that stretch reads NKVD. Residues 253 to 255 are G5; that stretch reads SAK.

The protein belongs to the TRAFAC class translation factor GTPase superfamily. Classic translation factor GTPase family. IF-2 subfamily.

It localises to the cytoplasm. In terms of biological role, one of the essential components for the initiation of protein synthesis. Protects formylmethionyl-tRNA from spontaneous hydrolysis and promotes its binding to the 30S ribosomal subunits. Also involved in the hydrolysis of GTP during the formation of the 70S ribosomal complex. The sequence is that of Translation initiation factor IF-2 from Deinococcus deserti (strain DSM 17065 / CIP 109153 / LMG 22923 / VCD115).